The sequence spans 251 residues: 5-oxoprolinase subunit A (251 aa).

Belongs to the LamB/PxpA family. In terms of assembly, forms a complex composed of PxpA, PxpB and PxpC.

The enzyme catalyses 5-oxo-L-proline + ATP + 2 H2O = L-glutamate + ADP + phosphate + H(+). Catalyzes the cleavage of 5-oxoproline to form L-glutamate coupled to the hydrolysis of ATP to ADP and inorganic phosphate. The sequence is that of 5-oxoprolinase subunit A from Tolumonas auensis (strain DSM 9187 / NBRC 110442 / TA 4).